The primary structure comprises 211 residues: Pyridoxine/pyridoxamine 5'-phosphate oxidase (211 aa).

Substrate is bound by residues 7-10 (RRDY) and Lys-65. FMN is bound by residues 60–65 (RIVLLK), 75–76 (YT), Arg-81, Lys-82, and Gln-104. Tyr-122, Arg-126, and Ser-130 together coordinate substrate. FMN-binding positions include 139-140 (QS) and Trp-184. 190–192 (RLH) contacts substrate. Position 194 (Arg-194) interacts with FMN.

Belongs to the pyridoxamine 5'-phosphate oxidase family. As to quaternary structure, homodimer. FMN serves as cofactor.

The catalysed reaction is pyridoxamine 5'-phosphate + O2 + H2O = pyridoxal 5'-phosphate + H2O2 + NH4(+). The enzyme catalyses pyridoxine 5'-phosphate + O2 = pyridoxal 5'-phosphate + H2O2. It participates in cofactor metabolism; pyridoxal 5'-phosphate salvage; pyridoxal 5'-phosphate from pyridoxamine 5'-phosphate: step 1/1. It functions in the pathway cofactor metabolism; pyridoxal 5'-phosphate salvage; pyridoxal 5'-phosphate from pyridoxine 5'-phosphate: step 1/1. Functionally, catalyzes the oxidation of either pyridoxine 5'-phosphate (PNP) or pyridoxamine 5'-phosphate (PMP) into pyridoxal 5'-phosphate (PLP). The chain is Pyridoxine/pyridoxamine 5'-phosphate oxidase from Aliivibrio salmonicida (strain LFI1238) (Vibrio salmonicida (strain LFI1238)).